Here is a 420-residue protein sequence, read N- to C-terminus: Protein ECERIFERUM 26-like (420 aa).

The protein belongs to the plant acyltransferase family. Highly expressed in flowers. Expressed in leaves.

In terms of biological role, involved in biosynthesis of the epicuticular wax. Plays a role in very-long-chain fatty acid (VLCFA) biosynthesis and is required for VLCFA elongation in leaf. Despite its classification as a BAHD acyltransferase based on sequence homology, CER26L does not seem to share the catalytic mechanism of the members of the BAHD family. The chain is Protein ECERIFERUM 26-like (CER26L) from Arabidopsis thaliana (Mouse-ear cress).